The primary structure comprises 488 residues: Glutamate--tRNA ligase (488 aa).

Residues 12–22 (PSPTGYMHVGN) carry the 'HIGH' region motif. Residues cysteine 109, cysteine 111, cysteine 136, and histidine 138 each contribute to the Zn(2+) site. A 'KMSKS' region motif is present at residues 253–257 (KLSKR). Lysine 256 serves as a coordination point for ATP.

The protein belongs to the class-I aminoacyl-tRNA synthetase family. Glutamate--tRNA ligase type 1 subfamily. As to quaternary structure, monomer. Zn(2+) serves as cofactor.

Its subcellular location is the cytoplasm. The enzyme catalyses tRNA(Glu) + L-glutamate + ATP = L-glutamyl-tRNA(Glu) + AMP + diphosphate. Its function is as follows. Catalyzes the attachment of glutamate to tRNA(Glu) in a two-step reaction: glutamate is first activated by ATP to form Glu-AMP and then transferred to the acceptor end of tRNA(Glu). The protein is Glutamate--tRNA ligase of Clostridium tetani (strain Massachusetts / E88).